The sequence spans 313 residues: Ribosomal RNA small subunit methyltransferase H (313 aa).

S-adenosyl-L-methionine contacts are provided by residues 34-36, Asp-55, Phe-82, Asp-103, and Gln-110; that span reads GGH.

This sequence belongs to the methyltransferase superfamily. RsmH family.

It localises to the cytoplasm. The enzyme catalyses cytidine(1402) in 16S rRNA + S-adenosyl-L-methionine = N(4)-methylcytidine(1402) in 16S rRNA + S-adenosyl-L-homocysteine + H(+). In terms of biological role, specifically methylates the N4 position of cytidine in position 1402 (C1402) of 16S rRNA. In Pelobacter propionicus (strain DSM 2379 / NBRC 103807 / OttBd1), this protein is Ribosomal RNA small subunit methyltransferase H.